Here is a 774-residue protein sequence, read N- to C-terminus: Multiple C2 domain and transmembrane region protein 11 (774 aa).

Residues 1–12 (MAVNGTGNGTGD) are compositionally biased toward gly residues. The segment at 1–30 (MAVNGTGNGTGDGDFSLKETSPNIGNGGVN) is disordered. 3 C2 domains span residues 9 to 145 (GTGD…PQWY), 184 to 307 (VTGE…SLWY), and 338 to 471 (LDES…THSY). Asp62, Asn110, Asp112, and Asp118 together coordinate Ca(2+). Helical transmembrane passes span 608 to 628 (LFVVFLPKYCVFSMLLYCFVF) and 722 to 742 (FVSCGVICFVSMKLLLTFLAF).

This sequence belongs to the MCTP family. Requires Ca(2+) as cofactor. In terms of tissue distribution, observed in flowers.

It localises to the endoplasmic reticulum membrane. In terms of biological role, may function as a signaling molecule by regulating the trafficking of other regulators. In Arabidopsis thaliana (Mouse-ear cress), this protein is Multiple C2 domain and transmembrane region protein 11.